Reading from the N-terminus, the 166-residue chain is Lipoprotein signal peptidase (166 aa).

The next 4 membrane-spanning stretches (helical) occupy residues 9–29, 45–65, 71–91, and 100–120; these read ASGA…FDQL, ALTS…FGFL, WQRW…CFLL, and FSVS…DRLV. Residues aspartate 126 and aspartate 144 contribute to the active site. Residues 135–155 form a helical membrane-spanning segment; the sequence is WHFPAFNLADSAITIGAVLLI.

Belongs to the peptidase A8 family.

The protein localises to the cell inner membrane. It catalyses the reaction Release of signal peptides from bacterial membrane prolipoproteins. Hydrolyzes -Xaa-Yaa-Zaa-|-(S,diacylglyceryl)Cys-, in which Xaa is hydrophobic (preferably Leu), and Yaa (Ala or Ser) and Zaa (Gly or Ala) have small, neutral side chains.. Its pathway is protein modification; lipoprotein biosynthesis (signal peptide cleavage). Functionally, this protein specifically catalyzes the removal of signal peptides from prolipoproteins. The chain is Lipoprotein signal peptidase from Burkholderia cenocepacia (strain ATCC BAA-245 / DSM 16553 / LMG 16656 / NCTC 13227 / J2315 / CF5610) (Burkholderia cepacia (strain J2315)).